A 361-amino-acid chain; its full sequence is Histidinol-phosphate aminotransferase (361 aa).

An N6-(pyridoxal phosphate)lysine modification is found at Lys216.

It belongs to the class-II pyridoxal-phosphate-dependent aminotransferase family. Histidinol-phosphate aminotransferase subfamily. In terms of assembly, homodimer. Pyridoxal 5'-phosphate is required as a cofactor.

The enzyme catalyses L-histidinol phosphate + 2-oxoglutarate = 3-(imidazol-4-yl)-2-oxopropyl phosphate + L-glutamate. It functions in the pathway amino-acid biosynthesis; L-histidine biosynthesis; L-histidine from 5-phospho-alpha-D-ribose 1-diphosphate: step 7/9. The sequence is that of Histidinol-phosphate aminotransferase from Francisella philomiragia subsp. philomiragia (strain ATCC 25017 / CCUG 19701 / FSC 153 / O#319-036).